Here is a 572-residue protein sequence, read N- to C-terminus: Pentatricopeptide repeat-containing protein At5g15010, mitochondrial (572 aa).

The N-terminal 57 residues, 1 to 57 (MRGIFLIRSRLSIFRAPAVKCLRFSNVLPSLSNNCIVRLYMEPPVACVLPLGLCSMF), are a transit peptide targeting the mitochondrion. PPR repeat units follow at residues 160–194 (SVRE…SPSL), 196–230 (NSQT…KLEM), 231–261 (GIDD…NKDK), 265–300 (DAKS…GVKH), 301–335 (DVVS…CIEP), 336–371 (DRKV…GIEP), 372–406 (NVVT…GLFP), 412–438 (HAFM…GCEP), 439–473 (TVET…TVGP), and 474–508 (DLSS…GMRP).

The protein belongs to the PPR family. P subfamily.

The protein resides in the mitochondrion. The chain is Pentatricopeptide repeat-containing protein At5g15010, mitochondrial from Arabidopsis thaliana (Mouse-ear cress).